Consider the following 244-residue polypeptide: 1-(5-phosphoribosyl)-5-[(5-phosphoribosylamino)methylideneamino] imidazole-4-carboxamide isomerase (244 aa).

The Proton acceptor role is filled by Asp-10. Asp-129 serves as the catalytic Proton donor.

This sequence belongs to the HisA/HisF family.

It localises to the cytoplasm. The catalysed reaction is 1-(5-phospho-beta-D-ribosyl)-5-[(5-phospho-beta-D-ribosylamino)methylideneamino]imidazole-4-carboxamide = 5-[(5-phospho-1-deoxy-D-ribulos-1-ylimino)methylamino]-1-(5-phospho-beta-D-ribosyl)imidazole-4-carboxamide. It participates in amino-acid biosynthesis; L-histidine biosynthesis; L-histidine from 5-phospho-alpha-D-ribose 1-diphosphate: step 4/9. This chain is 1-(5-phosphoribosyl)-5-[(5-phosphoribosylamino)methylideneamino] imidazole-4-carboxamide isomerase, found in Rhodococcus opacus (strain B4).